Here is a 609-residue protein sequence, read N- to C-terminus: Polyadenylate-binding protein 7 (609 aa).

RRM domains follow at residues 24–102, 112–189, 201–278, and 304–381; these read ASLY…WSVR, GNVF…KFMK, TNLY…RAQK, and SNIY…IAQK. The region spanning 509–586 is the PABC domain; sequence EMKKSIQQRQ…AFEVLKSSKT (78 aa).

It belongs to the polyadenylate-binding protein type-1 family. In terms of tissue distribution, expressed predominantly in siliques.

The protein resides in the cytoplasm. Its subcellular location is the nucleus. Binds the poly(A) tail of mRNA. Appears to be an important mediator of the multiple roles of the poly(A) tail in mRNA biogenesis, stability and translation. The sequence is that of Polyadenylate-binding protein 7 (PAB7) from Arabidopsis thaliana (Mouse-ear cress).